Consider the following 394-residue polypeptide: Alanine racemase 2 (394 aa).

Residue lysine 39 is the Proton acceptor; specific for D-alanine of the active site. Lysine 39 bears the N6-(pyridoxal phosphate)lysine mark. Arginine 139 contributes to the substrate binding site. The Proton acceptor; specific for L-alanine role is filled by tyrosine 272. A substrate-binding site is contributed by methionine 320.

It belongs to the alanine racemase family. Requires pyridoxal 5'-phosphate as cofactor.

It catalyses the reaction L-alanine = D-alanine. The protein operates within amino-acid biosynthesis; D-alanine biosynthesis; D-alanine from L-alanine: step 1/1. Catalyzes the interconversion of L-alanine and D-alanine. May also act on other amino acids. The polypeptide is Alanine racemase 2 (alr2) (Bacillus subtilis (strain 168)).